A 299-amino-acid polypeptide reads, in one-letter code: UTP--glucose-1-phosphate uridylyltransferase 1 (299 aa).

This sequence belongs to the UDPGP type 2 family.

It catalyses the reaction alpha-D-glucose 1-phosphate + UTP + H(+) = UDP-alpha-D-glucose + diphosphate. It functions in the pathway carbohydrate metabolism; nucleotide-sugar metabolism. In Streptococcus pyogenes serotype M6 (strain ATCC BAA-946 / MGAS10394), this protein is UTP--glucose-1-phosphate uridylyltransferase 1 (hasC1).